The following is a 251-amino-acid chain: Aspartate/glutamate leucyltransferase (251 aa).

This sequence belongs to the R-transferase family. Bpt subfamily.

It localises to the cytoplasm. The catalysed reaction is N-terminal L-glutamyl-[protein] + L-leucyl-tRNA(Leu) = N-terminal L-leucyl-L-glutamyl-[protein] + tRNA(Leu) + H(+). It carries out the reaction N-terminal L-aspartyl-[protein] + L-leucyl-tRNA(Leu) = N-terminal L-leucyl-L-aspartyl-[protein] + tRNA(Leu) + H(+). Its function is as follows. Functions in the N-end rule pathway of protein degradation where it conjugates Leu from its aminoacyl-tRNA to the N-termini of proteins containing an N-terminal aspartate or glutamate. This Xanthomonas euvesicatoria pv. vesicatoria (strain 85-10) (Xanthomonas campestris pv. vesicatoria) protein is Aspartate/glutamate leucyltransferase.